We begin with the raw amino-acid sequence, 176 residues long: Translation initiation factor IF-3 (176 aa).

It belongs to the IF-3 family. Monomer.

Its subcellular location is the cytoplasm. IF-3 binds to the 30S ribosomal subunit and shifts the equilibrium between 70S ribosomes and their 50S and 30S subunits in favor of the free subunits, thus enhancing the availability of 30S subunits on which protein synthesis initiation begins. In Microcystis aeruginosa (strain NIES-843 / IAM M-2473), this protein is Translation initiation factor IF-3.